A 240-amino-acid chain; its full sequence is tRNA (guanine-N(7)-)-methyltransferase (240 aa).

Positions 1 to 20 (MTESHDTPITSDGEARPHRR) are disordered. S-adenosyl-L-methionine-binding residues include Glu-70, Glu-95, Asp-122, and Asp-145. Asp-145 is a catalytic residue. Substrate-binding positions include Lys-149, Asp-181, and 218–221 (TKFE).

It belongs to the class I-like SAM-binding methyltransferase superfamily. TrmB family.

The catalysed reaction is guanosine(46) in tRNA + S-adenosyl-L-methionine = N(7)-methylguanosine(46) in tRNA + S-adenosyl-L-homocysteine. The protein operates within tRNA modification; N(7)-methylguanine-tRNA biosynthesis. In terms of biological role, catalyzes the formation of N(7)-methylguanine at position 46 (m7G46) in tRNA. In Pseudomonas putida (strain ATCC 700007 / DSM 6899 / JCM 31910 / BCRC 17059 / LMG 24140 / F1), this protein is tRNA (guanine-N(7)-)-methyltransferase.